The sequence spans 85 residues: Phosphocarrier protein HPr (85 aa).

Positions 1–85 constitute an HPr domain; sequence MFQRDIKITT…DLAKFLTTLK (85 aa). Catalysis depends on H15, which acts as the Pros-phosphohistidine intermediate.

It belongs to the HPr family.

The protein resides in the cytoplasm. Functionally, general (non sugar-specific) component of the phosphoenolpyruvate-dependent sugar phosphotransferase system (sugar PTS). This major carbohydrate active-transport system catalyzes the phosphorylation of incoming sugar substrates concomitantly with their translocation across the cell membrane. The phosphoryl group from phosphoenolpyruvate (PEP) is transferred to the phosphoryl carrier protein HPr by enzyme I. Phospho-HPr then transfers it to the PTS EIIA domain. This Buchnera aphidicola subsp. Baizongia pistaciae (strain Bp) protein is Phosphocarrier protein HPr (ptsH).